The following is a 175-amino-acid chain: Endoribonuclease YbeY (175 aa).

Histidine 121, histidine 125, and histidine 131 together coordinate Zn(2+). Residues 154–175 (PDPYSPAQQESQAQPENTELNP) form a disordered region. Over residues 159–175 (PAQQESQAQPENTELNP) the composition is skewed to polar residues.

It belongs to the endoribonuclease YbeY family. Zn(2+) is required as a cofactor.

It is found in the cytoplasm. Functionally, single strand-specific metallo-endoribonuclease involved in late-stage 70S ribosome quality control and in maturation of the 3' terminus of the 16S rRNA. This chain is Endoribonuclease YbeY, found in Alcanivorax borkumensis (strain ATCC 700651 / DSM 11573 / NCIMB 13689 / SK2).